A 293-amino-acid polypeptide reads, in one-letter code: Protein phosphatase 1 regulatory subunit 3B (293 aa).

Positions R129–I237 constitute a CBM21 domain.

Interacts with glycogen, PPP1CC catalytic subunit of PP1 and PYGL. Associates with glycogen particles. Forms complexes with debranching enzyme, glycogen phosphorylase, glycogen synthase and phosphorylase kinase which is necessary for its regulation of PP1 activity.

In terms of biological role, acts as a glycogen-targeting subunit for phosphatase PP1. Facilitates interaction of the PP1 with enzymes of the glycogen metabolism and regulates its activity. Suppresses the rate at which PP1 dephosphorylates (inactivates) glycogen phosphorylase and enhances the rate at which it activates glycogen synthase and therefore limits glycogen breakdown. This chain is Protein phosphatase 1 regulatory subunit 3B (ppp1r3b), found in Danio rerio (Zebrafish).